The primary structure comprises 545 residues: Glucose-6-phosphate isomerase (545 aa).

Glu-351 serves as the catalytic Proton donor. Active-site residues include His-382 and Lys-510.

Belongs to the GPI family.

It localises to the cytoplasm. It carries out the reaction alpha-D-glucose 6-phosphate = beta-D-fructose 6-phosphate. It participates in carbohydrate biosynthesis; gluconeogenesis. Its pathway is carbohydrate degradation; glycolysis; D-glyceraldehyde 3-phosphate and glycerone phosphate from D-glucose: step 2/4. Functionally, catalyzes the reversible isomerization of glucose-6-phosphate to fructose-6-phosphate. The chain is Glucose-6-phosphate isomerase from Helicobacter acinonychis (strain Sheeba).